The sequence spans 1159 residues: DNA-directed RNA polymerase subunit beta (1159 aa).

Belongs to the RNA polymerase beta chain family. As to quaternary structure, the RNAP catalytic core consists of 2 alpha, 1 beta, 1 beta' and 1 omega subunit. When a sigma factor is associated with the core the holoenzyme is formed, which can initiate transcription.

It carries out the reaction RNA(n) + a ribonucleoside 5'-triphosphate = RNA(n+1) + diphosphate. In terms of biological role, DNA-dependent RNA polymerase catalyzes the transcription of DNA into RNA using the four ribonucleoside triphosphates as substrates. The chain is DNA-directed RNA polymerase subunit beta from Deinococcus radiodurans (strain ATCC 13939 / DSM 20539 / JCM 16871 / CCUG 27074 / LMG 4051 / NBRC 15346 / NCIMB 9279 / VKM B-1422 / R1).